A 906-amino-acid polypeptide reads, in one-letter code: Protein translocase subunit SecA (906 aa).

ATP is bound by residues Q87, 105-109 (GEGKT), and D507. C890, C892, C901, and H902 together coordinate Zn(2+).

This sequence belongs to the SecA family. Monomer and homodimer. Part of the essential Sec protein translocation apparatus which comprises SecA, SecYEG and auxiliary proteins SecDF-YajC and YidC. Zn(2+) is required as a cofactor.

Its subcellular location is the cell inner membrane. It localises to the cytoplasm. The enzyme catalyses ATP + H2O + cellular proteinSide 1 = ADP + phosphate + cellular proteinSide 2.. In terms of biological role, part of the Sec protein translocase complex. Interacts with the SecYEG preprotein conducting channel. Has a central role in coupling the hydrolysis of ATP to the transfer of proteins into and across the cell membrane, serving both as a receptor for the preprotein-SecB complex and as an ATP-driven molecular motor driving the stepwise translocation of polypeptide chains across the membrane. This is Protein translocase subunit SecA from Thiobacillus denitrificans (strain ATCC 25259 / T1).